A 223-amino-acid polypeptide reads, in one-letter code: Probable GTP-binding protein EngB (223 aa).

The EngB-type G domain maps to M49–D223. Residues G57–S64, G84–Q88, D102–G105, T169–D172, and T203–S205 contribute to the GTP site. 2 residues coordinate Mg(2+): S64 and T86.

The protein belongs to the TRAFAC class TrmE-Era-EngA-EngB-Septin-like GTPase superfamily. EngB GTPase family. The cofactor is Mg(2+).

Necessary for normal cell division and for the maintenance of normal septation. The chain is Probable GTP-binding protein EngB from Granulibacter bethesdensis (strain ATCC BAA-1260 / CGDNIH1).